A 478-amino-acid polypeptide reads, in one-letter code: Aspartyl/glutamyl-tRNA(Asn/Gln) amidotransferase subunit B (478 aa).

This sequence belongs to the GatB/GatE family. GatB subfamily. As to quaternary structure, heterotrimer of A, B and C subunits.

The catalysed reaction is L-glutamyl-tRNA(Gln) + L-glutamine + ATP + H2O = L-glutaminyl-tRNA(Gln) + L-glutamate + ADP + phosphate + H(+). It carries out the reaction L-aspartyl-tRNA(Asn) + L-glutamine + ATP + H2O = L-asparaginyl-tRNA(Asn) + L-glutamate + ADP + phosphate + 2 H(+). Functionally, allows the formation of correctly charged Asn-tRNA(Asn) or Gln-tRNA(Gln) through the transamidation of misacylated Asp-tRNA(Asn) or Glu-tRNA(Gln) in organisms which lack either or both of asparaginyl-tRNA or glutaminyl-tRNA synthetases. The reaction takes place in the presence of glutamine and ATP through an activated phospho-Asp-tRNA(Asn) or phospho-Glu-tRNA(Gln). The protein is Aspartyl/glutamyl-tRNA(Asn/Gln) amidotransferase subunit B of Lachnoclostridium phytofermentans (strain ATCC 700394 / DSM 18823 / ISDg) (Clostridium phytofermentans).